The following is a 123-amino-acid chain: Venom peptide MmKTx1 (123 aa).

The first 21 residues, 1 to 21 (MSIKISAIALFMLSFTVFVNG), serve as a signal peptide directing secretion.

Belongs to the scorpion La1-like peptide family. Post-translationally, contains 4 disulfide bonds. In terms of tissue distribution, expressed by the venom gland.

The protein localises to the secreted. The sequence is that of Venom peptide MmKTx1 from Olivierus martensii (Manchurian scorpion).